A 223-amino-acid polypeptide reads, in one-letter code: HTH-type transcriptional dual regulator CecR (223 aa).

Positions 11–70 (EQAKKQLIAAALAQFGEYGMNATTREIAAQAGQNIAAITYYFGSKEDLYLACAQWIADFI) constitute an HTH tetR-type domain. The H-T-H motif DNA-binding region spans 33–52 (TTREIAAQAGQNIAAITYYF).

Its subcellular location is the cytoplasm. Regulates transcription of the cecR-ybhGFSR operon and the rhlE gene, which altogether are involved in the control of sensitivity to cefoperazone and chloramphenicol. Represses the cecR-ybhGFSR operon and activates the rhlE operon. Acts by binding to a palindromic sequence within the intergenic spacer located between these two divergently transcribed operons. This is HTH-type transcriptional dual regulator CecR from Shigella flexneri.